The sequence spans 66 residues: Large ribosomal subunit protein bL28 (66 aa).

The interval 1 to 26 is disordered; the sequence is MAKDAITGARTRFGNQRSHALNSSRR. Residues 13–25 are compositionally biased toward polar residues; the sequence is FGNQRSHALNSSR.

The protein belongs to the bacterial ribosomal protein bL28 family.

The chain is Large ribosomal subunit protein bL28 from Leuconostoc mesenteroides subsp. mesenteroides (strain ATCC 8293 / DSM 20343 / BCRC 11652 / CCM 1803 / JCM 6124 / NCDO 523 / NBRC 100496 / NCIMB 8023 / NCTC 12954 / NRRL B-1118 / 37Y).